We begin with the raw amino-acid sequence, 858 residues long: Ubiquitin carboxyl-terminal hydrolase 5 (858 aa).

Ala2 is subject to N-acetylalanine. The tract at residues 74-96 (RRTRRPKEEDPATGTGDPPRKKP) is disordered. Residue Lys113 forms a Glycyl lysine isopeptide (Lys-Gly) (interchain with G-Cter in SUMO) linkage. 2 positions are modified to phosphoserine: Ser149 and Ser156. The UBP-type; degenerate zinc finger occupies 175–283 (QVSKHAFSLK…EHLSHFGIDM (109 aa)). The cysteines at positions 195 and 816 are disulfide-linked. Zn(2+) contacts are provided by Cys199 and Cys202. Trp209 contacts substrate. Cys219 is a binding site for Zn(2+). Residue 221 to 224 (RRYF) participates in substrate binding. His232 serves as a coordination point for Zn(2+). Residues Tyr259, Tyr261, and Asp264 each coordinate substrate. Position 292 is a phosphothreonine (Thr292). Residues 326-856 (TGIRNLGNSC…LGYIYFYQRV (531 aa)) form the USP domain. The active-site Nucleophile is the Cys335. Thr623 is modified (phosphothreonine). UBA domains are found at residues 654 to 695 (MLDE…VMSH) and 722 to 762 (PPPE…IFSH). A phosphoserine mark is found at Ser779, Ser783, and Ser785. The active-site Proton acceptor is His818.

This sequence belongs to the peptidase C19 family. Homodimer. Interacts with TRIML1. In terms of processing, ubiquitinated by SMURF1; leading to proteasomal degradation. Post-translationally, SUMOylated at Lys-113; SUMOylation affects the interaction with Cav3.2 channels.

It is found in the cytoplasm. It localises to the stress granule. The protein resides in the nucleus. The catalysed reaction is Thiol-dependent hydrolysis of ester, thioester, amide, peptide and isopeptide bonds formed by the C-terminal Gly of ubiquitin (a 76-residue protein attached to proteins as an intracellular targeting signal).. Its function is as follows. Deubiquitinating enzyme that participates in a wide range of cellular processes by specifically cleaving isopeptide bonds between ubiquitin and substrate proteins or ubiquitin itself. Affects thereby important cellular signaling pathways such as NF-kappa-B, Wnt/beta-catenin, and cytokine production by regulating ubiquitin-dependent protein degradation. Participates in the activation of the Wnt signaling pathway by promoting FOXM1 deubiquitination and stabilization that induces the recruitment of beta-catenin to Wnt target gene promoter. Regulates the assembly and disassembly of heat-induced stress granules by mediating the hydrolysis of unanchored ubiquitin chains. Promotes lipopolysaccharide-induced apoptosis and inflammatory response by stabilizing the TXNIP protein. Affects T-cell biology by stabilizing the inhibitory receptor on T-cells PDC1. Acts as a negative regulator of autophagy by regulating ULK1 at both protein and mRNA levels. Acts also as a negative regulator of type I interferon production by simultaneously removing both 'Lys-48'-linked unanchored and 'Lys-63'-linked anchored polyubiquitin chains on the transcription factor IRF3. Modulates the stability of DNA mismatch repair protein MLH1 and counteracts the effect of the ubiquitin ligase UBR4. Upon activation by insulin, it gets phosphorylated through mTORC1-mediated phosphorylation to enhance YTHDF1 stability by removing 'Lys-11'-linked polyubiquitination. May also deubiquitinate other substrates such as the calcium channel CACNA1H. The sequence is that of Ubiquitin carboxyl-terminal hydrolase 5 (USP5) from Homo sapiens (Human).